Here is a 492-residue protein sequence, read N- to C-terminus: ATP synthase subunit beta, chloroplastic (492 aa).

An ATP-binding site is contributed by 170–177 (GGAGVGKT).

Belongs to the ATPase alpha/beta chains family. In terms of assembly, F-type ATPases have 2 components, CF(1) - the catalytic core - and CF(0) - the membrane proton channel. CF(1) has five subunits: alpha(3), beta(3), gamma(1), delta(1), epsilon(1). CF(0) has four main subunits: a(1), b(1), b'(1) and c(9-12).

Its subcellular location is the plastid. The protein localises to the chloroplast thylakoid membrane. The catalysed reaction is ATP + H2O + 4 H(+)(in) = ADP + phosphate + 5 H(+)(out). Its function is as follows. Produces ATP from ADP in the presence of a proton gradient across the membrane. The catalytic sites are hosted primarily by the beta subunits. This chain is ATP synthase subunit beta, chloroplastic, found in Anthoceros angustus (Hornwort).